Reading from the N-terminus, the 72-residue chain is Sperm protein associated with the nucleus on the X chromosome N1 (72 aa).

Residues 1–40 are disordered; it reads MEKPTSSTNGEKRKSPCDSNNKNDEMQETPNRDLVLEPSL. The segment covering 10-35 has biased composition (basic and acidic residues); sequence GEKRKSPCDSNNKNDEMQETPNRDLV.

It belongs to the SPAN-X family.

The protein is Sperm protein associated with the nucleus on the X chromosome N1 (SPANXN1) of Gorilla gorilla gorilla (Western lowland gorilla).